The chain runs to 370 residues: UDP-N-acetylglucosamine--N-acetylmuramyl-(pentapeptide) pyrophosphoryl-undecaprenol N-acetylglucosamine transferase (370 aa).

Residues 14-16 (TGG), Asn-125, Arg-168, Ser-196, and Gln-297 contribute to the UDP-N-acetyl-alpha-D-glucosamine site.

The protein belongs to the glycosyltransferase 28 family. MurG subfamily.

It localises to the cell inner membrane. The catalysed reaction is di-trans,octa-cis-undecaprenyl diphospho-N-acetyl-alpha-D-muramoyl-L-alanyl-D-glutamyl-meso-2,6-diaminopimeloyl-D-alanyl-D-alanine + UDP-N-acetyl-alpha-D-glucosamine = di-trans,octa-cis-undecaprenyl diphospho-[N-acetyl-alpha-D-glucosaminyl-(1-&gt;4)]-N-acetyl-alpha-D-muramoyl-L-alanyl-D-glutamyl-meso-2,6-diaminopimeloyl-D-alanyl-D-alanine + UDP + H(+). It functions in the pathway cell wall biogenesis; peptidoglycan biosynthesis. Cell wall formation. Catalyzes the transfer of a GlcNAc subunit on undecaprenyl-pyrophosphoryl-MurNAc-pentapeptide (lipid intermediate I) to form undecaprenyl-pyrophosphoryl-MurNAc-(pentapeptide)GlcNAc (lipid intermediate II). This chain is UDP-N-acetylglucosamine--N-acetylmuramyl-(pentapeptide) pyrophosphoryl-undecaprenol N-acetylglucosamine transferase, found in Nitrobacter hamburgensis (strain DSM 10229 / NCIMB 13809 / X14).